The primary structure comprises 323 residues: Ferrochelatase (323 aa).

The Fe cation site is built by histidine 196 and glutamate 277.

Belongs to the ferrochelatase family.

It localises to the cytoplasm. It catalyses the reaction heme b + 2 H(+) = protoporphyrin IX + Fe(2+). It participates in porphyrin-containing compound metabolism; protoheme biosynthesis; protoheme from protoporphyrin-IX: step 1/1. Catalyzes the ferrous insertion into protoporphyrin IX. The polypeptide is Ferrochelatase (Haemophilus influenzae (strain 86-028NP)).